A 466-amino-acid chain; its full sequence is Cysteine--tRNA ligase (466 aa).

Cys27 lines the Zn(2+) pocket. Residues 29–39 (PTVYNYFHIGN) carry the 'HIGH' region motif. Residues Cys207, His232, and Glu236 each contribute to the Zn(2+) site. The 'KMSKS' region signature appears at 264–268 (KMSKS). Residue Lys267 participates in ATP binding.

Belongs to the class-I aminoacyl-tRNA synthetase family. Monomer. Zn(2+) is required as a cofactor.

It is found in the cytoplasm. It catalyses the reaction tRNA(Cys) + L-cysteine + ATP = L-cysteinyl-tRNA(Cys) + AMP + diphosphate. The polypeptide is Cysteine--tRNA ligase (Clostridium novyi (strain NT)).